Here is a 612-residue protein sequence, read N- to C-terminus: Dihydroxy-acid dehydratase (612 aa).

Mg(2+) is bound at residue D81. C122 is a [2Fe-2S] cluster binding site. 2 residues coordinate Mg(2+): D123 and K124. Position 124 is an N6-carboxylysine (K124). Position 195 (C195) interacts with [2Fe-2S] cluster. A Mg(2+)-binding site is contributed by E491. S517 (proton acceptor) is an active-site residue.

This sequence belongs to the IlvD/Edd family. As to quaternary structure, homodimer. The cofactor is [2Fe-2S] cluster. Mg(2+) is required as a cofactor.

The catalysed reaction is (2R)-2,3-dihydroxy-3-methylbutanoate = 3-methyl-2-oxobutanoate + H2O. The enzyme catalyses (2R,3R)-2,3-dihydroxy-3-methylpentanoate = (S)-3-methyl-2-oxopentanoate + H2O. It functions in the pathway amino-acid biosynthesis; L-isoleucine biosynthesis; L-isoleucine from 2-oxobutanoate: step 3/4. It participates in amino-acid biosynthesis; L-valine biosynthesis; L-valine from pyruvate: step 3/4. Functions in the biosynthesis of branched-chain amino acids. Catalyzes the dehydration of (2R,3R)-2,3-dihydroxy-3-methylpentanoate (2,3-dihydroxy-3-methylvalerate) into 2-oxo-3-methylpentanoate (2-oxo-3-methylvalerate) and of (2R)-2,3-dihydroxy-3-methylbutanoate (2,3-dihydroxyisovalerate) into 2-oxo-3-methylbutanoate (2-oxoisovalerate), the penultimate precursor to L-isoleucine and L-valine, respectively. In Haemophilus influenzae (strain 86-028NP), this protein is Dihydroxy-acid dehydratase.